A 98-amino-acid chain; its full sequence is NADH-ubiquinone oxidoreductase chain 4L (98 aa).

3 helical membrane-spanning segments follow: residues Thr-2–Phe-22, Thr-29–Leu-49, and Ile-61–Val-81.

The protein belongs to the complex I subunit 4L family. Core subunit of respiratory chain NADH dehydrogenase (Complex I) which is composed of 45 different subunits.

The protein localises to the mitochondrion inner membrane. The enzyme catalyses a ubiquinone + NADH + 5 H(+)(in) = a ubiquinol + NAD(+) + 4 H(+)(out). Functionally, core subunit of the mitochondrial membrane respiratory chain NADH dehydrogenase (Complex I) which catalyzes electron transfer from NADH through the respiratory chain, using ubiquinone as an electron acceptor. Part of the enzyme membrane arm which is embedded in the lipid bilayer and involved in proton translocation. The chain is NADH-ubiquinone oxidoreductase chain 4L (MT-ND4L) from Oxymycterus rufus (Red hocicudo).